We begin with the raw amino-acid sequence, 349 residues long: Succinylglutamate desuccinylase (349 aa).

Histidine 70, glutamate 73, and histidine 166 together coordinate Zn(2+). Residue glutamate 229 is part of the active site.

This sequence belongs to the AspA/AstE family. Succinylglutamate desuccinylase subfamily. The cofactor is Zn(2+).

It catalyses the reaction N-succinyl-L-glutamate + H2O = L-glutamate + succinate. It functions in the pathway amino-acid degradation; L-arginine degradation via AST pathway; L-glutamate and succinate from L-arginine: step 5/5. Functionally, transforms N(2)-succinylglutamate into succinate and glutamate. The protein is Succinylglutamate desuccinylase of Burkholderia pseudomallei (strain 1710b).